The sequence spans 291 residues: MDDGIVSYGEHPLNRLKFFQFDKSNDVTLLLIHGGAWRDPNNTYNDFKDMISHIQKNQYAAKYNLIAMNYRLSPEVKHPFHLWDVLEGLQFLVQNYDIHKISIAGHSVGATLMLQLLDYNKILDTGFQILVEDSKADKNRTETDLHVPSKKERILMNEAMEKLQLRTFCFIDGIYDITQLISEYGCPYESFVNNAFSSPEQYAEATQLSSSTVDVGSPFSYNTHSANVRNELNLVILQSNKDELLSMRQTNLFIEYLTQKNLNFKPFVGEWGGHEHVYRHEDVANIVLDSI.

The HGGXW motif lies at 33 to 37; that stretch reads HGGAW. The active-site Nucleophile is Ser107. Residues Asp242 and His280 contribute to the active site.

Belongs to the kynurenine formamidase family. In terms of assembly, homodimer.

The enzyme catalyses N-formyl-L-kynurenine + H2O = L-kynurenine + formate + H(+). The protein operates within amino-acid degradation; L-tryptophan degradation via kynurenine pathway; L-kynurenine from L-tryptophan: step 2/2. Catalyzes the hydrolysis of N-formyl-L-kynurenine to L-kynurenine, the second step in the kynurenine pathway of tryptophan degradation. Kynurenine may be further oxidized to nicotinic acid, NAD(H) and NADP(H). Required for elimination of toxic metabolites. The protein is Kynurenine formamidase of Debaryomyces hansenii (strain ATCC 36239 / CBS 767 / BCRC 21394 / JCM 1990 / NBRC 0083 / IGC 2968) (Yeast).